The chain runs to 483 residues: UDP-N-acetylmuramyl-tripeptide synthetase (483 aa).

Position 43 (Ser43) interacts with UDP-N-acetyl-alpha-D-muramoyl-L-alanyl-D-glutamate. ATP is bound at residue Gly116–Thr122. Residues Thr160–Thr161, Ser187, and Arg195 contribute to the UDP-N-acetyl-alpha-D-muramoyl-L-alanyl-D-glutamate site. Lys229 bears the N6-carboxylysine mark.

The protein belongs to the MurCDEF family. MurE subfamily. In terms of processing, carboxylation is probably crucial for Mg(2+) binding and, consequently, for the gamma-phosphate positioning of ATP.

The protein localises to the cytoplasm. The protein operates within cell wall biogenesis; peptidoglycan biosynthesis. Functionally, catalyzes the addition of an amino acid to the nucleotide precursor UDP-N-acetylmuramoyl-L-alanyl-D-glutamate (UMAG) in the biosynthesis of bacterial cell-wall peptidoglycan. This is UDP-N-acetylmuramyl-tripeptide synthetase from Lactococcus lactis subsp. cremoris (strain MG1363).